The following is a 372-amino-acid chain: Putative 26S proteasome regulatory subunit homolog MTBMA_c13930 (372 aa).

164-171 (GSPGTGKT) is an ATP binding site.

Belongs to the AAA ATPase family.

The 26S proteasome is involved in the ATP-dependent degradation of ubiquitinated proteins. The regulatory (or ATPase) complex confers ATP dependency and substrate specificity to the 26S complex. The protein is Putative 26S proteasome regulatory subunit homolog MTBMA_c13930 of Methanothermobacter marburgensis (strain ATCC BAA-927 / DSM 2133 / JCM 14651 / NBRC 100331 / OCM 82 / Marburg) (Methanobacterium thermoautotrophicum).